The sequence spans 279 residues: 2-dehydropantoate 2-reductase (279 aa).

NADP(+)-binding positions include 6–11, Lys66, and Asn86; that span reads GLGAVG. The Proton donor role is filled by Lys158. Substrate-binding positions include Lys158, Asn162, Asn166, Asn176, and 225-228; that span reads NLSS. Glu240 is an NADP(+) binding site.

It belongs to the ketopantoate reductase family.

The protein localises to the cytoplasm. It catalyses the reaction (R)-pantoate + NAD(+) = 2-dehydropantoate + NADH + H(+). It carries out the reaction (R)-pantoate + NADP(+) = 2-dehydropantoate + NADPH + H(+). It participates in cofactor biosynthesis; coenzyme A biosynthesis. Catalyzes the NAD(P)H-dependent reduction of ketopantoate into pantoic acid. The sequence is that of 2-dehydropantoate 2-reductase from Pyrobaculum aerophilum (strain ATCC 51768 / DSM 7523 / JCM 9630 / CIP 104966 / NBRC 100827 / IM2).